Reading from the N-terminus, the 745-residue chain is Poly(A) polymerase alpha (745 aa).

The segment covering 1–17 (MPFPVTTQGSQQTQPPQ) has biased composition (low complexity). A disordered region spans residues 1-22 (MPFPVTTQGSQQTQPPQKHYGI). 2 positions are modified to phosphoserine: S10 and S24. ATP is bound by residues 100-102 (FGS), T109, 113-115 (DID), D167, K228, Y237, and 246-247 (GV). Positions 113, 115, and 167 each coordinate Mg(2+). Residues K444, K445, K506, and K507 each participate in a glycyl lysine isopeptide (Lys-Gly) (interchain with G-Cter in SUMO) cross-link. The Nuclear localization signal 1 signature appears at 490–507 (RKQLHQLLPNHVLQKKKK). Positions 508 to 643 (HSTEGVKLTA…TSGNAATKIP (136 aa)) are ser/Thr-rich. Over residues 523–534 (LDLSMDSDNSMS) the composition is skewed to low complexity. Disordered regions lie at residues 523 to 565 (LDLS…AVTA) and 577 to 704 (SVPQ…SETI). Residues 535-557 (VPSPTSATKTSPLNSSGSSQGRN) show a composition bias toward polar residues. Phosphoserine occurs at positions 537 and 558. Low complexity-rich tracts occupy residues 583–594 (SSESSGGTSSES) and 611–640 (TVSR…NAAT). N6-acetyllysine occurs at positions 641 and 650. The Nuclear localization signal 2 signature appears at 650–665 (KRTSSPHKEESPKKTK). Basic and acidic residues-rich tracts occupy residues 655 to 666 (PHKEESPKKTKT) and 682 to 692 (GHDKTEAKEQL). The interval 677-745 (CLALSGHDKT…KNSIKLRLNR (69 aa)) is required for interaction with NUDT21. Low complexity predominate over residues 694–704 (TETSTTQSETI). K736 carries the post-translational modification N6-acetyllysine; alternate. Residue K736 forms a Glycyl lysine isopeptide (Lys-Gly) (interchain with G-Cter in SUMO); alternate linkage. The residue at position 738 (S738) is a Phosphoserine. At K740 the chain carries N6-acetyllysine; alternate. A Glycyl lysine isopeptide (Lys-Gly) (interchain with G-Cter in SUMO); alternate cross-link involves residue K740.

It belongs to the poly(A) polymerase family. Monomer. Found in a complex with CPSF1, FIP1L1 and PAPOLA. Interacts with AHCYL1 and FIP1L1; the interaction with AHCYL1 seems to increase interaction with FIP1L1. Interacts with NUDT21; the interaction is diminished by acetylation. Interacts with KPNB1; the interaction promotes PAP nuclear import and is inhibited by acetylation of PAP. Mg(2+) serves as cofactor. It depends on Mn(2+) as a cofactor. Polysumoylated. Varying sumoylation depending on tissue- and cell-type. Highly sumoylated in bladder and NIH 3T3 cells. Sumoylation is required for nuclear localization and enhances PAP stability. Desumoylated by SENP1. Inhibits polymerase activity. In terms of processing, hyperphosphorylation on multiple CDK2 consensus and non-consensus sites in the C-terminal Ser/Thr-rich region represses PAP activity in late M-phase. Phosphorylation/dephosphorylation may regulate the interaction between PAP and CPSF. Post-translationally, acetylated in the C-terminus. Acetylation decreases interaction with NUDT21 and KPNB1, and inhibits nuclear localization through inhibiting binding to the importin alpha/beta complex.

The protein resides in the cytoplasm. It localises to the nucleus. It carries out the reaction RNA(n) + ATP = RNA(n)-3'-adenine ribonucleotide + diphosphate. Its function is as follows. Polymerase that creates the 3'-poly(A) tail of mRNA's. Also required for the endoribonucleolytic cleavage reaction at some polyadenylation sites. May acquire specificity through interaction with a cleavage and polyadenylation specificity factor (CPSF) at its C-terminus. In Homo sapiens (Human), this protein is Poly(A) polymerase alpha (PAPOLA).